The primary structure comprises 208 residues: ATP-dependent Clp protease proteolytic subunit (208 aa).

The Nucleophile role is filled by Ser-106. His-131 is a catalytic residue.

The protein belongs to the peptidase S14 family. Fourteen ClpP subunits assemble into 2 heptameric rings which stack back to back to give a disk-like structure with a central cavity, resembling the structure of eukaryotic proteasomes.

Its subcellular location is the cytoplasm. It carries out the reaction Hydrolysis of proteins to small peptides in the presence of ATP and magnesium. alpha-casein is the usual test substrate. In the absence of ATP, only oligopeptides shorter than five residues are hydrolyzed (such as succinyl-Leu-Tyr-|-NHMec, and Leu-Tyr-Leu-|-Tyr-Trp, in which cleavage of the -Tyr-|-Leu- and -Tyr-|-Trp bonds also occurs).. Cleaves peptides in various proteins in a process that requires ATP hydrolysis. Has a chymotrypsin-like activity. Plays a major role in the degradation of misfolded proteins. In Dinoroseobacter shibae (strain DSM 16493 / NCIMB 14021 / DFL 12), this protein is ATP-dependent Clp protease proteolytic subunit.